A 249-amino-acid polypeptide reads, in one-letter code: Sugar fermentation stimulation protein homolog (249 aa).

This sequence belongs to the SfsA family.

The sequence is that of Sugar fermentation stimulation protein homolog from Synechococcus sp. (strain RCC307).